A 222-amino-acid chain; its full sequence is Charged multivesicular body protein 2a (222 aa).

Methionine 1 is subject to N-acetylmethionine. Positions 12-53 (EELLRQNQRALNRAMRELDRERQKLETQEKKIIADIKKMAKQ) form a coiled coil. An interaction with VPS4B region spans residues 56 to 222 (MDAVRIMAKD…EERLKNLRRD (167 aa)). The segment covering 179-188 (LSNLPSTGGS) has biased composition (polar residues). The interval 179–198 (LSNLPSTGGSLSVAAGGKKA) is disordered. Serine 184 carries the phosphoserine modification. Phosphothreonine is present on threonine 185. Residues serine 188, serine 190, and serine 203 each carry the phosphoserine modification. Residues 195–222 (GKKAEATASALADADADLEERLKNLRRD) adopt a coiled-coil conformation. Residues 210-220 (ADLEERLKNLR) carry the MIT-interacting motif motif. The segment at 217–222 (KNLRRD) is interaction with VTA1.

This sequence belongs to the SNF7 family. As to quaternary structure, probable core component of the endosomal sorting required for transport complex III (ESCRT-III). ESCRT-III components are thought to multimerize to form a flat lattice on the perimeter membrane of the endosome. Several assembly forms of ESCRT-III may exist that interact and act sequentially. In vitro, heteromerizes with CHMP3 (but not CHMP4) to form helical tubular structures that expose membrane-interacting sites on the outside whereas VPS4B can associate on the inside of the tubule. Interacts with CHMP1B, CHMP2B, CHMP3, CHMP4A, CHMP4B, CHMP4C and CHMP5. Interacts with VPS4A; the interaction is direct. Interacts with VPS4B; the interaction is direct. Interacts with MITD1. Interacts with VTA1; the interaction probably involves the open conformation of CHMP2A. In terms of processing, ISGylated in a CHMP5-dependent manner. Isgylation weakens and inhibits its interactions with VPS4A and VTA1 respectively. As to expression, widely expressed. Highly expressed in brain, heart, liver and kidney.

Its subcellular location is the late endosome membrane. The protein resides in the cytoplasm. It localises to the nucleus envelope. Probable core component of the endosomal sorting required for transport complex III (ESCRT-III) which is involved in multivesicular bodies (MVBs) formation and sorting of endosomal cargo proteins into MVBs. MVBs contain intraluminal vesicles (ILVs) that are generated by invagination and scission from the limiting membrane of the endosome and mostly are delivered to lysosomes enabling degradation of membrane proteins, such as stimulated growth factor receptors, lysosomal enzymes and lipids. The MVB pathway appears to require the sequential function of ESCRT-O, -I,-II and -III complexes. ESCRT-III proteins mostly dissociate from the invaginating membrane before the ILV is released. The ESCRT machinery also functions in topologically equivalent membrane fission events, such as the terminal stages of cytokinesis. Together with SPAST, the ESCRT-III complex promotes nuclear envelope sealing and mitotic spindle disassembly during late anaphase. Recruited to the reforming nuclear envelope (NE) during anaphase by LEMD2. ESCRT-III proteins are believed to mediate the necessary vesicle extrusion and/or membrane fission activities, possibly in conjunction with the AAA ATPase VPS4. This Mus musculus (Mouse) protein is Charged multivesicular body protein 2a (Chmp2a).